The primary structure comprises 637 residues: 3D-(3,5/4)-trihydroxycyclohexane-1,2-dione hydrolase (637 aa).

E66 lines the thiamine diphosphate pocket. Residues 442–522 are thiamine pyrophosphate binding; sequence SLPGDLQRLW…INILLFDNAG (81 aa). Residues D493 and N520 each coordinate Mg(2+).

It belongs to the TPP enzyme family. Mg(2+) is required as a cofactor. The cofactor is thiamine diphosphate.

It carries out the reaction 3D-3,5/4-trihydroxycyclohexane-1,2-dione + H2O = 5-deoxy-D-glucuronate + H(+). Its pathway is polyol metabolism; myo-inositol degradation into acetyl-CoA; acetyl-CoA from myo-inositol: step 3/7. Involved in the cleavage of the C1-C2 bond of 3D-(3,5/4)-trihydroxycyclohexane-1,2-dione (THcHDO) to yield 5-deoxy-glucuronate (5DG). This chain is 3D-(3,5/4)-trihydroxycyclohexane-1,2-dione hydrolase, found in Shouchella clausii (strain KSM-K16) (Alkalihalobacillus clausii).